The following is a 386-amino-acid chain: Protein phosphatase methylesterase 1 (386 aa).

Residues Met-1–Lys-38 are disordered. Ser-15 is modified (phosphoserine). The residue at position 16 (Arg-16) is an Asymmetric dimethylarginine; alternate. Arg-16 is modified (omega-N-methylarginine; alternate). Ser-42 carries the phosphoserine modification. Catalysis depends on residues Ser-156 and Asp-181. Positions Ile-254–Ser-265 are enriched in acidic residues. The disordered stretch occupies residues Ile-254–Lys-280. Residues Ile-268–Lys-280 show a composition bias toward basic and acidic residues. The active site involves His-349.

The protein belongs to the AB hydrolase superfamily. As to quaternary structure, binds PPP2CA and PPP2CB. Phosphorylated by SIK1 following increases in intracellular sodium, leading to dissociation from the protein phosphatase 2A (PP2A) complex and subsequent dephosphorylation of sodium/potassium-transporting ATPase ATP1A1.

The enzyme catalyses [phosphatase 2A protein]-C-terminal L-leucine methyl ester + H2O = [phosphatase 2A protein]-C-terminal L-leucine + methanol + H(+). In terms of biological role, demethylates proteins that have been reversibly carboxymethylated. Demethylates PPP2CB (in vitro) and PPP2CA. Binding to PPP2CA displaces the manganese ion and inactivates the enzyme. In Homo sapiens (Human), this protein is Protein phosphatase methylesterase 1 (PPME1).